The chain runs to 24 residues: Fraternine (24 aa).

Cys11 and Cys24 are oxidised to a cystine. A Cysteine amide modification is found at Cys24.

As to expression, expressed by the venom gland.

It is found in the secreted. Wasp venom peptide that acts as a potent mast cell degranulating peptide without hemolytic activity. Shows neuroprotective effect, since it prevents the death of dopaminergic neurons of the brain substantia nigra region and recovers motor deficit in a 6-hydroxydopamine (6-OHDA)-induced murine model of Parkinson disease. The polypeptide is Fraternine (Parachartergus fraternus (Artistic wasp)).